We begin with the raw amino-acid sequence, 71 residues long: Protein SlyX homolog (71 aa).

This sequence belongs to the SlyX family.

The chain is Protein SlyX homolog from Azotobacter vinelandii (strain DJ / ATCC BAA-1303).